The following is a 164-amino-acid chain: Peptidyl-prolyl cis-trans isomerase (164 aa).

A PPIase cyclophilin-type domain is found at 7 to 163; it reads FFDLQANGEN…KKITIADCGQ (157 aa).

Belongs to the cyclophilin-type PPIase family. PPIase A subfamily.

The protein resides in the cytoplasm. It catalyses the reaction [protein]-peptidylproline (omega=180) = [protein]-peptidylproline (omega=0). Its activity is regulated as follows. Binds cyclosporin A (CsA). CsA mediates some of its effects via an inhibitory action on PPIase. Functionally, PPIases accelerate the folding of proteins. It catalyzes the cis-trans isomerization of proline imidic peptide bonds in oligopeptides. This chain is Peptidyl-prolyl cis-trans isomerase, found in Hemicentrotus pulcherrimus (Sea urchin).